The sequence spans 319 residues: Acetyl-coenzyme A carboxylase carboxyl transferase subunit alpha (319 aa).

The CoA carboxyltransferase C-terminal domain occupies D35–D296.

It belongs to the AccA family. Acetyl-CoA carboxylase is a heterohexamer composed of biotin carboxyl carrier protein (AccB), biotin carboxylase (AccC) and two subunits each of ACCase subunit alpha (AccA) and ACCase subunit beta (AccD).

The protein localises to the cytoplasm. The catalysed reaction is N(6)-carboxybiotinyl-L-lysyl-[protein] + acetyl-CoA = N(6)-biotinyl-L-lysyl-[protein] + malonyl-CoA. Its pathway is lipid metabolism; malonyl-CoA biosynthesis; malonyl-CoA from acetyl-CoA: step 1/1. In terms of biological role, component of the acetyl coenzyme A carboxylase (ACC) complex. First, biotin carboxylase catalyzes the carboxylation of biotin on its carrier protein (BCCP) and then the CO(2) group is transferred by the carboxyltransferase to acetyl-CoA to form malonyl-CoA. The chain is Acetyl-coenzyme A carboxylase carboxyl transferase subunit alpha from Vibrio cholerae serotype O1 (strain ATCC 39541 / Classical Ogawa 395 / O395).